An 834-amino-acid chain; its full sequence is Taste receptor type 1 member 2 (834 aa).

The signal sequence occupies residues 1-19; that stretch reads MEPRVRTVCFLFFLLRVLA. Over 20–561 the chain is Extracellular; that stretch reads EPAKNSDFYL…SFLEWHEAAT (542 aa). 7 N-linked (GlcNAc...) asparagine glycosylation sites follow: Asn-84, Asn-292, Asn-312, Asn-363, Asn-423, Asn-482, and Asn-522. A helical membrane pass occupies residues 562–582; that stretch reads IAVALLAALGFLSTLAILVIF. Residues 583-597 are Cytoplasmic-facing; that stretch reads WRHFETPMVRSAGGP. A helical transmembrane segment spans residues 598–618; sequence MCFLMLTLLLVAYMVVPVYVG. Over 619-630 the chain is Extracellular; it reads LPKVSTCLCRQA. Residues 631-651 traverse the membrane as a helical segment; that stretch reads LFPVCFTICISCIAVRSFQIV. Over 652–676 the chain is Cytoplasmic; it reads CVFKMASRFPRAYSYWVRYQGSYVS. Residues 677–697 traverse the membrane as a helical segment; it reads VAFITALKMVTVVISLLATGL. Residues 698–722 are Extracellular-facing; sequence NPTTRTDTDDPKIMIISCNPNYRNS. Residues 723 to 743 form a helical membrane-spanning segment; it reads LLFNTSLDLLLSVAGFSFAYM. Residues 744–755 are Cytoplasmic-facing; the sequence is GKELPTNYNEAK. Residues 756–776 traverse the membrane as a helical segment; the sequence is FITFSMTFYFTSSVSLCTFMS. The Extracellular segment spans residues 777 to 779; that stretch reads VYD. A helical membrane pass occupies residues 780-800; the sequence is GVLVTIVDLLVTVFNLLAISL. The Cytoplasmic segment spans residues 801 to 834; sequence GYFGPKCYMILFYPERNTPAYFNSMIQGYTMRRD.

The protein belongs to the G-protein coupled receptor 3 family. TAS1R subfamily. In terms of assembly, forms heterodimers with TAS1R3.

The protein localises to the cell membrane. In terms of biological role, putative taste receptor. TAS1R2/TAS1R3 recognizes diverse natural and synthetic sweeteners. The polypeptide is Taste receptor type 1 member 2 (TAS1R2) (Saimiri sciureus (Common squirrel monkey)).